We begin with the raw amino-acid sequence, 536 residues long: Phosphoenolpyruvate carboxykinase (ATP) (536 aa).

Positions 62, 203, and 209 each coordinate substrate. ATP is bound by residues K209, H228, and 244–252 (GLSGTGKTT). Residues K209 and H228 each contribute to the Mn(2+) site. A Mn(2+)-binding site is contributed by D265. ATP-binding positions include E293, R329, 445-446 (RI), and T451. R329 contacts substrate.

Belongs to the phosphoenolpyruvate carboxykinase (ATP) family. In terms of assembly, monomer. It depends on Mn(2+) as a cofactor.

The protein localises to the cytoplasm. The enzyme catalyses oxaloacetate + ATP = phosphoenolpyruvate + ADP + CO2. The protein operates within carbohydrate biosynthesis; gluconeogenesis. In terms of biological role, involved in the gluconeogenesis. Catalyzes the conversion of oxaloacetate (OAA) to phosphoenolpyruvate (PEP) through direct phosphoryl transfer between the nucleoside triphosphate and OAA. In Actinobacillus pleuropneumoniae serotype 7 (strain AP76), this protein is Phosphoenolpyruvate carboxykinase (ATP).